The sequence spans 505 residues: Maturase K (505 aa).

It belongs to the intron maturase 2 family. MatK subfamily.

The protein resides in the plastid. It localises to the chloroplast. Its function is as follows. Usually encoded in the trnK tRNA gene intron. Probably assists in splicing its own and other chloroplast group II introns. The sequence is that of Maturase K from Idiospermum australiense (Ribbonwood tree).